A 723-amino-acid chain; its full sequence is Solute carrier organic anion transporter family member 4A1 (723 aa).

Residues 1-102 are Cytoplasmic-facing; that stretch reads MPQHAMGDTH…KCLQVFNTPK (102 aa). The disordered stretch occupies residues 23 to 64; it reads SSATDSGCDTPPSSRASPASLRSAHGTLGSSSQPLFEPQAEK. Positions 33-46 are enriched in low complexity; sequence PPSSRASPASLRSA. Phosphoserine is present on residues Ser-39, Ser-42, and Ser-45. A helical transmembrane segment spans residues 103–123; that stretch reads GFLFFLCAASFLQGMTVNGFI. At 124-142 the chain is on the extracellular side; that stretch reads NTVITSIERRFDLHSYQSG. Residues 143 to 163 traverse the membrane as a helical segment; sequence LIASSYDIAACLCLTFVSYFG. The Cytoplasmic segment spans residues 164–169; it reads GNGHKP. A helical membrane pass occupies residues 170–194; that stretch reads RWLGWGVLVLGIGSLVFALPHFTAG. Residues 195-224 are Extracellular-facing; it reads RYEVEMDEGLGTGTCLTNQSHVECKDSASG. N-linked (GlcNAc...) asparagine glycosylation is present at Asn-212. A helical membrane pass occupies residues 225–255; it reads LSNYRLIFMLGQLLHGVGATPLYTLGVTYLD. Residues 256–274 are Cytoplasmic-facing; sequence ENVKSSYSPIYIAIFYTAA. Residues 275-295 traverse the membrane as a helical segment; the sequence is ILGPAAGYLIGGAMLNVYTEV. Residues 296–309 are Extracellular-facing; it reads GQRTELTTDSPLWV. Residues 310–334 traverse the membrane as a helical segment; the sequence is GAWWIGFLGTGIAAFLIAIPILGYP. Residues 335–380 lie on the Cytoplasmic side of the membrane; the sequence is RQLPGSQRYVVMRAAETQQLKDHSRGAVSNPAFGKTVRDLPLSIWL. Residues 381–402 form a helical membrane-spanning segment; the sequence is LLRNPTFILLCLAGATEATLIA. The Extracellular portion of the chain corresponds to 403 to 422; the sequence is GMSTFGPKFFEAQFSLSASE. A helical membrane pass occupies residues 423 to 446; the sequence is AATLFGYLVVPAGGGGTLLGGFLV. Residues 447–450 are Cytoplasmic-facing; it reads NKFK. Residues 451–473 traverse the membrane as a helical segment; it reads LRGSGIIRFCLFCTLTSLLAFFV. Over 474 to 582 the chain is Extracellular; the sequence is FLMHCPNVHM…ASTCQSKPFL (109 aa). The Kazal-like domain occupies 500–557; sequence LDLKAACNAIYCCQPKHYSPLCGSDGTMYYSPCYAGCPADAETDLGGQKVYRGCSCIL. Disulfide bonds link Cys-506–Cys-536 and Cys-521–Cys-555. Residue Asn-566 is glycosylated (N-linked (GlcNAc...) asparagine). The helical transmembrane segment at 583 to 605 threads the bilayer; that stretch reads LVLVFVVIIFTFLSSIPALTATL. Over 606-614 the chain is Cytoplasmic; sequence RCVSDRQRS. The helical transmembrane segment at 615-640 threads the bilayer; it reads FALGIQWIVVRTLGSIPGPIAFGWVI. Residues 641 to 673 lie on the Extracellular side of the membrane; the sequence is DKACLLWQDQCGHQGSCFVYENEAMSRYMLIAG. The chain crosses the membrane as a helical span at residues 674-691; the sequence is LTFKVLGFLFFVAAYFLY. Residues 692–723 lie on the Cytoplasmic side of the membrane; it reads KSPSVSSDGLEASLPSQSSASDSPTEQLQSNV. The tract at residues 700–723 is disordered; that stretch reads GLEASLPSQSSASDSPTEQLQSNV. Low complexity predominate over residues 701-723; sequence LEASLPSQSSASDSPTEQLQSNV.

This sequence belongs to the organo anion transporter (TC 2.A.60) family.

It localises to the cell membrane. It catalyses the reaction 3,3',5-triiodo-L-thyronine(out) + L-glutamate(in) = 3,3',5-triiodo-L-thyronine(in) + L-glutamate(out). It carries out the reaction L-thyroxine(out) + L-glutamate(in) = L-thyroxine(in) + L-glutamate(out). The catalysed reaction is estrone 3-sulfate(out) + L-glutamate(in) = estrone 3-sulfate(in) + L-glutamate(out). The enzyme catalyses taurocholate(out) + L-glutamate(in) = taurocholate(in) + L-glutamate(out). It catalyses the reaction 3,3',5-triiodo-L-thyronine(out) = 3,3',5-triiodo-L-thyronine(in). It carries out the reaction L-thyroxine(out) = L-thyroxine(in). The catalysed reaction is 3,3',5'-triiodo-L-thyronine(out) = 3,3',5'-triiodo-L-thyronine(in). The enzyme catalyses estrone 3-sulfate(out) = estrone 3-sulfate(in). It catalyses the reaction 17beta-estradiol 17-O-(beta-D-glucuronate)(out) = 17beta-estradiol 17-O-(beta-D-glucuronate)(in). It carries out the reaction taurocholate(out) = taurocholate(in). The catalysed reaction is prostaglandin E2(out) = prostaglandin E2(in). Its function is as follows. Organic anion antiporter with apparent broad substrate specificity. Recognizes various substrates including thyroid hormones 3,3',5-triiodo-L-thyronine (T3), L-thyroxine (T4) and 3,3',5'-triiodo-L-thyronine (rT3), conjugated steroids such as estrone 3-sulfate and estradiol 17-beta glucuronide, bile acids such as taurocholate and prostanoids such as prostaglandin E2, likely operating in a tissue-specific manner. May be involved in uptake of metabolites from the circulation into organs such as kidney, liver or placenta. Possibly drives the selective transport of thyroid hormones and estrogens coupled to an outward glutamate gradient across the microvillous membrane of the placenta. The transport mechanism, its electrogenicity and potential tissue-specific counterions remain to be elucidated. This Mus musculus (Mouse) protein is Solute carrier organic anion transporter family member 4A1 (Slco4a1).